Consider the following 379-residue polypeptide: Chaperone protein DnaJ (379 aa).

The 66-residue stretch at 7 to 72 (CYYETLEVDR…DKRAAYDRYG (66 aa)) folds into the J domain. A CR-type zinc finger spans residues 135 to 213 (GKTAQIEIPV…CSGAGRIERE (79 aa)). 8 residues coordinate Zn(2+): C148, C151, C165, C168, C187, C190, C201, and C204. CXXCXGXG motif repeat units lie at residues 148–155 (CESCSGTG), 165–172 (CSMCGGAG), 187–194 (CPGCQGRG), and 201–208 (CPACSGAG).

This sequence belongs to the DnaJ family. Homodimer. The cofactor is Zn(2+).

It is found in the cytoplasm. Its function is as follows. Participates actively in the response to hyperosmotic and heat shock by preventing the aggregation of stress-denatured proteins and by disaggregating proteins, also in an autonomous, DnaK-independent fashion. Unfolded proteins bind initially to DnaJ; upon interaction with the DnaJ-bound protein, DnaK hydrolyzes its bound ATP, resulting in the formation of a stable complex. GrpE releases ADP from DnaK; ATP binding to DnaK triggers the release of the substrate protein, thus completing the reaction cycle. Several rounds of ATP-dependent interactions between DnaJ, DnaK and GrpE are required for fully efficient folding. Also involved, together with DnaK and GrpE, in the DNA replication of plasmids through activation of initiation proteins. This chain is Chaperone protein DnaJ, found in Rhodopseudomonas palustris (strain BisB18).